The primary structure comprises 938 residues: Bifunctional glutamine synthetase adenylyltransferase/adenylyl-removing enzyme (938 aa).

Residues 1 to 457 (MLEADAARLK…HFDHVFGDPS (457 aa)) are adenylyl removase. The segment at 460-938 (AHTLDSMWAA…ALWTIVFGSA (479 aa)) is adenylyl transferase.

The protein belongs to the GlnE family. The cofactor is Mg(2+).

The catalysed reaction is [glutamine synthetase]-O(4)-(5'-adenylyl)-L-tyrosine + phosphate = [glutamine synthetase]-L-tyrosine + ADP. The enzyme catalyses [glutamine synthetase]-L-tyrosine + ATP = [glutamine synthetase]-O(4)-(5'-adenylyl)-L-tyrosine + diphosphate. Functionally, involved in the regulation of glutamine synthetase GlnA, a key enzyme in the process to assimilate ammonia. When cellular nitrogen levels are high, the C-terminal adenylyl transferase (AT) inactivates GlnA by covalent transfer of an adenylyl group from ATP to specific tyrosine residue of GlnA, thus reducing its activity. Conversely, when nitrogen levels are low, the N-terminal adenylyl removase (AR) activates GlnA by removing the adenylyl group by phosphorolysis, increasing its activity. The regulatory region of GlnE binds the signal transduction protein PII (GlnB) which indicates the nitrogen status of the cell. In Aromatoleum aromaticum (strain DSM 19018 / LMG 30748 / EbN1) (Azoarcus sp. (strain EbN1)), this protein is Bifunctional glutamine synthetase adenylyltransferase/adenylyl-removing enzyme.